The sequence spans 150 residues: MTTTTLDIHQILKLLPHRYPFLLVDRVLDMEKGKRITALKNVTMNEPFFNGHFPHRPVMPGVLMLEAMAQAAALLSFHSLDIVPDDNTVYYFAAIDGARFKRPVEPGDQLTLEVEIERMKAGISKFKGRALVGSELACEATLMCAMRQIN.

His-52 is an active-site residue.

The protein belongs to the thioester dehydratase family. FabZ subfamily.

The protein localises to the cytoplasm. It carries out the reaction a (3R)-hydroxyacyl-[ACP] = a (2E)-enoyl-[ACP] + H2O. In terms of biological role, involved in unsaturated fatty acids biosynthesis. Catalyzes the dehydration of short chain beta-hydroxyacyl-ACPs and long chain saturated and unsaturated beta-hydroxyacyl-ACPs. This Variovorax paradoxus (strain S110) protein is 3-hydroxyacyl-[acyl-carrier-protein] dehydratase FabZ.